The primary structure comprises 608 residues: Elongation factor 4 (608 aa).

Residues 11–193 (KKIRNFSIIA…QIVEKVPEPS (183 aa)) form the tr-type G domain. GTP contacts are provided by residues 23–28 (DHGKST) and 140–143 (NKID).

The protein belongs to the TRAFAC class translation factor GTPase superfamily. Classic translation factor GTPase family. LepA subfamily.

The protein localises to the cell membrane. The catalysed reaction is GTP + H2O = GDP + phosphate + H(+). Functionally, required for accurate and efficient protein synthesis under certain stress conditions. May act as a fidelity factor of the translation reaction, by catalyzing a one-codon backward translocation of tRNAs on improperly translocated ribosomes. Back-translocation proceeds from a post-translocation (POST) complex to a pre-translocation (PRE) complex, thus giving elongation factor G a second chance to translocate the tRNAs correctly. Binds to ribosomes in a GTP-dependent manner. This is Elongation factor 4 from Listeria innocua serovar 6a (strain ATCC BAA-680 / CLIP 11262).